Consider the following 259-residue polypeptide: uncharacterized protein (259 aa).

The 159-residue stretch at 1–159 (MIEQFFRPDS…TEIIIKDPYR (159 aa)) folds into the FAD-binding PCMH-type domain.

This is an uncharacterized protein from Escherichia coli O157:H7.